We begin with the raw amino-acid sequence, 204 residues long: Regulatory protein RecX (204 aa).

Positions 1 to 22 are enriched in polar residues; sequence MTKSSRPQSISDSVSVAGSQGT. Residues 1–44 form a disordered region; that stretch reads MTKSSRPQSISDSVSVAGSQGTLDDLRARVASVPEAPTREPVDS.

Belongs to the RecX family.

The protein resides in the cytoplasm. In terms of biological role, modulates RecA activity. The polypeptide is Regulatory protein RecX (Mycobacteroides abscessus (strain ATCC 19977 / DSM 44196 / CCUG 20993 / CIP 104536 / JCM 13569 / NCTC 13031 / TMC 1543 / L948) (Mycobacterium abscessus)).